A 118-amino-acid chain; its full sequence is Ribulose bisphosphate carboxylase small subunit (118 aa).

It belongs to the RuBisCO small chain family. As to quaternary structure, heterohexadecamer of 8 large and 8 small subunits.

Its function is as follows. RuBisCO catalyzes two reactions: the carboxylation of D-ribulose 1,5-bisphosphate, the primary event in carbon dioxide fixation, as well as the oxidative fragmentation of the pentose substrate. Both reactions occur simultaneously and in competition at the same active site. Although the small subunit is not catalytic it is essential for maximal activity. This is Ribulose bisphosphate carboxylase small subunit from Rhodobacter capsulatus (Rhodopseudomonas capsulata).